The following is a 256-amino-acid chain: POU domain class 2-associating factor 1 (256 aa).

A disordered region spans residues 1 to 23; sequence MLWQKPTAPEQAPAPPRPYQGVR. An OCA domain is found at 16 to 38; it reads PRPYQGVRVKEPVKELLRRKRGH.

Belongs to the POU2AF family. In terms of assembly, interacts with POU2F1/OCT1 and POU2F2/OCT2; the interaction increases POU2F1 and POU2F2 transactivation activity. Ubiquitinated; mediated by SIAH1 or SIAH2 and leading to its subsequent proteasomal degradation.

It is found in the nucleus. In terms of biological role, transcriptional coactivator that specifically associates with either POU2F1/OCT1 or POU2F2/OCT2. It boosts the POU2F1/OCT1 mediated promoter activity and to a lesser extent, that of POU2F2/OCT2. It recognizes the POU domains of POU2F1/OCT1 and POU2F2/OCT2. It is essential for the response of B-cells to antigens and required for the formation of germinal centers. Regulates IL6 expression in B cells as POU2F2/OCT2 coactivator. This chain is POU domain class 2-associating factor 1 (POU2AF1), found in Bos taurus (Bovine).